The following is a 445-amino-acid chain: TNF receptor-associated factor family protein DDB_G0290971 (445 aa).

The RING-type; degenerate zinc-finger motif lies at 23–67 (CPICFDLYYSSSSKKEVFQCRDGHLACKSCWSDSLLNKKECMICR). 2 consecutive TRAF-type zinc fingers follow at residues 133–186 (KHQV…QLDA) and 186–242 (AHAL…ESID). A coiled-coil region spans residues 269–307 (QLELVECKNQIYQINNKYEKLLERVIKLEQLSMDASNKL). The 128-residue stretch at 314–441 (KNSIIFATFS…EDKLVIGLRI (128 aa)) folds into the MATH domain.

This sequence belongs to the TNF receptor-associated factor family. A subfamily.

The protein localises to the cytoplasm. Probable adapter protein and signal transducer that links members of the tumor necrosis factor receptor family to different signaling pathways by association with the receptor cytoplasmic domain and kinases. The sequence is that of TNF receptor-associated factor family protein DDB_G0290971 from Dictyostelium discoideum (Social amoeba).